Reading from the N-terminus, the 316-residue chain is Arginase-1 (316 aa).

Residues 1–26 (MAKERHSVGVIGAPFSKGQPRRGVEE) are disordered. His-101, Asp-124, His-126, and Asp-128 together coordinate Mn(2+). Residues 126-130 (HADIN), 137-139 (CGN), and Asp-183 contribute to the substrate site. Residues Asp-232 and Asp-234 each contribute to the Mn(2+) site. Thr-246 serves as a coordination point for substrate.

It belongs to the arginase family. In terms of assembly, homotrimer. Requires Mn(2+) as cofactor. As to expression, strongest expression in liver.

The enzyme catalyses L-arginine + H2O = urea + L-ornithine. It participates in nitrogen metabolism; urea cycle; L-ornithine and urea from L-arginine: step 1/1. This chain is Arginase-1 (arg1), found in Xenopus laevis (African clawed frog).